Reading from the N-terminus, the 183-residue chain is A-type ATP synthase subunit E (183 aa).

This sequence belongs to the V-ATPase E subunit family. In terms of assembly, has multiple subunits with at least A(3), B(3), C, D, E, F, H, I and proteolipid K(x).

It is found in the cell membrane. Component of the A-type ATP synthase that produces ATP from ADP in the presence of a proton gradient across the membrane. The chain is A-type ATP synthase subunit E from Methanococcoides burtonii (strain DSM 6242 / NBRC 107633 / OCM 468 / ACE-M).